The sequence spans 286 residues: Ribosomal RNA small subunit methyltransferase A (286 aa).

Residues Asn-33, Val-35, Gly-60, Glu-81, Asp-111, and Asn-129 each coordinate S-adenosyl-L-methionine.

Belongs to the class I-like SAM-binding methyltransferase superfamily. rRNA adenine N(6)-methyltransferase family. RsmA subfamily.

The protein resides in the cytoplasm. It carries out the reaction adenosine(1518)/adenosine(1519) in 16S rRNA + 4 S-adenosyl-L-methionine = N(6)-dimethyladenosine(1518)/N(6)-dimethyladenosine(1519) in 16S rRNA + 4 S-adenosyl-L-homocysteine + 4 H(+). In terms of biological role, specifically dimethylates two adjacent adenosines (A1518 and A1519) in the loop of a conserved hairpin near the 3'-end of 16S rRNA in the 30S particle. May play a critical role in biogenesis of 30S subunits. This is Ribosomal RNA small subunit methyltransferase A from Streptomyces coelicolor (strain ATCC BAA-471 / A3(2) / M145).